The following is a 407-amino-acid chain: Carbamoyl phosphate synthase small chain (407 aa).

The tract at residues 1-205 (MTETTPKTAP…LQDGYGEQDA (205 aa)) is CPSase. L-glutamine is bound by residues Ser-60, Gly-257, and Gly-259. The Glutamine amidotransferase type-1 domain maps to 209 to 397 (HVVALDFGVK…INLIRERKGQ (189 aa)). Catalysis depends on Cys-286, which acts as the Nucleophile. L-glutamine-binding residues include Leu-287, Gln-290, Asn-328, Gly-330, and Phe-331. Residues His-370 and Glu-372 contribute to the active site.

Belongs to the CarA family. Composed of two chains; the small (or glutamine) chain promotes the hydrolysis of glutamine to ammonia, which is used by the large (or ammonia) chain to synthesize carbamoyl phosphate. Tetramer of heterodimers (alpha,beta)4.

It catalyses the reaction hydrogencarbonate + L-glutamine + 2 ATP + H2O = carbamoyl phosphate + L-glutamate + 2 ADP + phosphate + 2 H(+). The catalysed reaction is L-glutamine + H2O = L-glutamate + NH4(+). It functions in the pathway amino-acid biosynthesis; L-arginine biosynthesis; carbamoyl phosphate from bicarbonate: step 1/1. It participates in pyrimidine metabolism; UMP biosynthesis via de novo pathway; (S)-dihydroorotate from bicarbonate: step 1/3. Small subunit of the glutamine-dependent carbamoyl phosphate synthetase (CPSase). CPSase catalyzes the formation of carbamoyl phosphate from the ammonia moiety of glutamine, carbonate, and phosphate donated by ATP, constituting the first step of 2 biosynthetic pathways, one leading to arginine and/or urea and the other to pyrimidine nucleotides. The small subunit (glutamine amidotransferase) binds and cleaves glutamine to supply the large subunit with the substrate ammonia. This is Carbamoyl phosphate synthase small chain from Brucella canis (strain ATCC 23365 / NCTC 10854 / RM-666).